The primary structure comprises 422 residues: Histidine--tRNA ligase (422 aa).

Belongs to the class-II aminoacyl-tRNA synthetase family. As to quaternary structure, homodimer.

The protein resides in the cytoplasm. It carries out the reaction tRNA(His) + L-histidine + ATP = L-histidyl-tRNA(His) + AMP + diphosphate + H(+). This is Histidine--tRNA ligase from Nocardia farcinica (strain IFM 10152).